Reading from the N-terminus, the 1580-residue chain is Adhesion G protein-coupled receptor L3 (1580 aa).

The first 19 residues, 1–19, serve as a signal peptide directing secretion; that stretch reads MWPSQLLVFMMLLAPIIHG. Residues 20-949 lie on the Extracellular side of the membrane; sequence GKHSERHPAL…VHDLLLDVIT (930 aa). The interval 23–81 is disordered; the sequence is SERHPALASPLRHAERGPGGALPPRHLLQQPAAERATAHRGPGPRGATRGVRGPGAHGA. An SUEL-type lectin domain is found at 103 to 192; the sequence is SCESYPIELR…KYLEVQYECV (90 aa). 5 cysteine pairs are disulfide-bonded: cysteine 104/cysteine 134, cysteine 113/cysteine 191, cysteine 146/cysteine 178, cysteine 159/cysteine 165, and cysteine 203/cysteine 385. Asparagine 161 carries N-linked (GlcNAc...) asparagine glycosylation. An Olfactomedin-like domain is found at 202-461; it reads LCPGLLKGVY…VVKYSLDFGP (260 aa). An interaction with FLRT3 region spans residues 317–347; it reads YHDTSPYRWGGKSDIDLAVDENGLWVIYATE. Ca(2+) contacts are provided by aspartate 332, asparagine 380, alanine 381, and valine 435. The segment at 494-540 is disordered; the sequence is EISTTGPLGTGSTTTSTTLRTTTWSPGRSTTPSVSGRRNRSTSTPSP. Residues 496–521 show a composition bias toward low complexity; it reads STTGPLGTGSTTTSTTLRTTTWSPGR. Positions 522 to 539 are enriched in polar residues; the sequence is STTPSVSGRRNRSTSTPS. N-linked (GlcNAc...) asparagine glycans are attached at residues asparagine 532, asparagine 617, asparagine 827, asparagine 840, asparagine 885, and asparagine 911. One can recognise a GAIN-B domain in the interval 756–935; the sequence is DIVRENTDNI…AVLMAHVEVK (180 aa). Cystine bridges form between cysteine 886-cysteine 917 and cysteine 905-cysteine 919. The segment at 886–935 is GPS; the sequence is CSFWSYSKRTMTGYWSTQGCRLLTTNKTHTTCSCNHLTNFAVLMAHVEVK. The stachel stretch occupies residues 923-939; it reads TNFAVLMAHVEVKHSDA. Residues 950–970 form a helical membrane-spanning segment; that stretch reads WVGILLSLVCLLICIFTFCFF. The Cytoplasmic segment spans residues 971–978; it reads RGLQSDRN. A helical membrane pass occupies residues 979–999; that stretch reads TIHKNLCISLFVAELLFLIGI. The N-linked (GlcNAc...) asparagine glycan is linked to asparagine 1000. At 1000–1007 the chain is on the extracellular side; that stretch reads NRTDQPIA. The chain crosses the membrane as a helical span at residues 1008-1028; sequence CAVFAALLHFFFLAAFTWMFL. Topologically, residues 1029–1050 are cytoplasmic; sequence EGVQLYIMLVEVFESEHSRRKY. A helical membrane pass occupies residues 1051–1071; that stretch reads FYLVGYGMPALIVAVSAAVDY. Over 1072-1088 the chain is Extracellular; sequence RSYGTDKVCWLRLDTYF. Residues 1089 to 1109 traverse the membrane as a helical segment; it reads IWSFIGPATLIIMLNVIFLGI. Residues 1110-1142 lie on the Cytoplasmic side of the membrane; sequence ALYKMFHHTAILKPESGCLDNINYEDNRPFIKS. Residues 1143–1163 form a helical membrane-spanning segment; it reads WVIGAIALLCLLGLTWAFGLM. At 1164-1169 the chain is on the extracellular side; the sequence is YINEST. The N-linked (GlcNAc...) asparagine glycan is linked to asparagine 1166. The helical transmembrane segment at 1170 to 1190 threads the bilayer; sequence VIMAYLFTIFNSLQGMFIFIF. The Cytoplasmic portion of the chain corresponds to 1191 to 1580; sequence HCVLQKKVRK…KGPAHLVTSL (390 aa). The tract at residues 1213 to 1238 is disordered; that stretch reads GRSTESSIGSGKTSGSRTPGRYSTGS. Phosphoserine is present on serine 1254. Positions 1555–1580 are disordered; it reads FIVPPNKDGTPPEGSSKGPAHLVTSL. A PDZ-binding motif is present at residues 1575–1580; sequence HLVTSL.

This sequence belongs to the G-protein coupled receptor 2 family. LN-TM7 subfamily. Heterodimer of 2 chains generated by proteolytic processing; the large extracellular N-terminal fragment and the membrane-bound C-terminal fragment predominantly remain associated and non-covalently linked. Interacts (via olfactomedin-like domain) with FLRT1 (via extracellular domain). Interacts (via olfactomedin-like domain) with FLRT2 (via extracellular domain). Interacts (via olfactomedin-like domain) with FLRT3 (via extracellular domain); the interaction is direct. Interacts (via extracellular domain) with TENM1. Interacts (via extracellular domain) with TENM2. Interacts (via extracellular domain) with TENM3. Identified in a complex with FLRT3 and UNC5B; does not interact with UNC5B by itself. Identified in a complex with FLRT3 and UNC5D; does not interact with UNC5D by itself. As to quaternary structure, interacts (via PDZ-binding motif) with SHANK3. Interacts (via PDZ-binding motif) with DLG4. Post-translationally, autoproteolytically processed at the GPS region of the GAIN-B domain; this cleavage modulates receptor activity. Brain-specific distribution but low levels are also detected in lung and spleen.

The protein localises to the cell membrane. It is found in the postsynaptic cell membrane. The protein resides in the cell projection. Its subcellular location is the axon. It localises to the cell junction. Forms a heterodimer of 2 chains generated by proteolytic processing that remain associated through non-covalent interactions mediated by the GAIN-B domain. In the inactivated receptor, the Stachel sequence (also named stalk) is embedded in the GAIN-B domain, where it adopts a beta-strand conformation. On activation, the Stachel moves into the 7 transmembrane region and adopts a twisted hook-shaped configuration that forms contacts within the receptor, leading to coupling of a G-alpha protein, which activates signaling. The cleaved GAIN-B and N-terminal domains can then dissociate from the rest of the receptor. Orphan adhesion G-protein coupled receptor (aGPCR), which mediates synapse specificity. Ligand binding causes a conformation change that triggers signaling via guanine nucleotide-binding proteins (G proteins) and modulates the activity of downstream effectors. ADGRL3 is coupled with different classes of G alpha proteins, such as G(12)/G(13), G(s), G(i) or G(q), depending on the context. Coupling to G(12)/G(13) G proteins, which mediates the activation Rho small GTPases is the most efficient. Following G-protein coupled receptor activation, associates with cell adhesion molecules that are expressed at the surface of adjacent cells to direct synapse specificity. Specifically mediates the establishment of Schaffer-collateral synapses formed by CA3-region axons on CA1-region pyramidal neurons in the hippocampus. Localizes to postsynaptic spines in excitatory synapses in the S.oriens and S.radiatum and interacts with presynaptic cell adhesion molecules FLRT3 and TENM2, promoting synapse formation. Plays a role in the development of glutamatergic synapses in the cortex. Important in determining the connectivity rates between the principal neurons in the cortex. Functionally, orphan adhesion G-protein coupled receptor (aGPCR), which mediates synapse specificity. Ligand binding causes a conformation change that triggers signaling via guanine nucleotide-binding proteins (G proteins) and modulates the activity of downstream effectors, such as adenylate cyclase. Isoform 1 is specifically coupled to G(s) G proteins and mediates activation of adenylate cyclase activity. Following G-protein coupled receptor activation, undergoes liquid-liquid phase transition, associates with (1) cell adhesion molecules that are expressed at the surface of adjacent cells, as well as (2) PDZ-containing proteins, such as SHANK3 and DLG4, in the cytoplasm to direct synapse formation. The polypeptide is Adhesion G protein-coupled receptor L3 (Bos taurus (Bovine)).